A 478-amino-acid chain; its full sequence is Alpha,alpha-trehalose-phosphate synthase [UDP-forming] (478 aa).

Tyrosine 89 and aspartate 143 together coordinate D-glucose 6-phosphate. The UDP site is built by arginine 280 and lysine 285. UDP-alpha-D-glucose is bound by residues arginine 280 and lysine 285. D-glucose 6-phosphate is bound at residue arginine 318. Residues isoleucine 357 and 383-387 each bind UDP; that span reads LVSYE. UDP-alpha-D-glucose-binding positions include isoleucine 357 and 379–387; that span reads DGMNLVSYE.

It belongs to the glycosyltransferase 20 family.

The enzyme catalyses D-glucose 6-phosphate + UDP-alpha-D-glucose = alpha,alpha-trehalose 6-phosphate + UDP + H(+). The protein operates within carbohydrate biosynthesis. Its activity is regulated as follows. Inhibited by validoxylamine A, a non-reactive trehalose analog. Synthase catalytic subunit of the trehalose synthase complex that catalyzes the production of trehalose from glucose-6-phosphate and UDP-alpha-D-glucose in a two step process. The polypeptide is Alpha,alpha-trehalose-phosphate synthase [UDP-forming] (Candida albicans (strain SC5314 / ATCC MYA-2876) (Yeast)).